The chain runs to 377 residues: Leukocyte elastase inhibitor (377 aa).

At M1 the chain carries N-acetylmethionine.

This sequence belongs to the serpin family. Ov-serpin subfamily.

It localises to the cytoplasm. In terms of biological role, regulates the activity of the neutrophil proteases. The protein is Leukocyte elastase inhibitor (serpinb1) of Xenopus laevis (African clawed frog).